Here is a 165-residue protein sequence, read N- to C-terminus: Shikimate kinase (165 aa).

11-16 serves as a coordination point for ATP; it reads GAGKTT. Thr15 contributes to the Mg(2+) binding site. Positions 33, 57, and 78 each coordinate substrate. Arg116 is a binding site for ATP. Arg134 serves as a coordination point for substrate.

Belongs to the shikimate kinase family. As to quaternary structure, monomer. It depends on Mg(2+) as a cofactor.

The protein localises to the cytoplasm. The catalysed reaction is shikimate + ATP = 3-phosphoshikimate + ADP + H(+). Its pathway is metabolic intermediate biosynthesis; chorismate biosynthesis; chorismate from D-erythrose 4-phosphate and phosphoenolpyruvate: step 5/7. Catalyzes the specific phosphorylation of the 3-hydroxyl group of shikimic acid using ATP as a cosubstrate. The polypeptide is Shikimate kinase (Bacillus anthracis (strain A0248)).